We begin with the raw amino-acid sequence, 123 residues long: Small ribosomal subunit protein uS12 (123 aa).

Positions 1–28 (MPTIQQLIRKPREPKRVRSKSQHLESCP) are disordered. 3-methylthioaspartic acid is present on Asp89.

It belongs to the universal ribosomal protein uS12 family. In terms of assembly, part of the 30S ribosomal subunit. Contacts proteins S8 and S17. May interact with IF1 in the 30S initiation complex.

Functionally, with S4 and S5 plays an important role in translational accuracy. Interacts with and stabilizes bases of the 16S rRNA that are involved in tRNA selection in the A site and with the mRNA backbone. Located at the interface of the 30S and 50S subunits, it traverses the body of the 30S subunit contacting proteins on the other side and probably holding the rRNA structure together. The combined cluster of proteins S8, S12 and S17 appears to hold together the shoulder and platform of the 30S subunit. The protein is Small ribosomal subunit protein uS12 of Cereibacter sphaeroides (strain ATCC 17029 / ATH 2.4.9) (Rhodobacter sphaeroides).